A 469-amino-acid chain; its full sequence is GTPase Der (469 aa).

EngA-type G domains lie at Pro-3–Glu-167 and Pro-176–Phe-349. Residues Gly-9–Ser-16, Asp-56–Leu-60, Asn-119–Glu-122, Gly-182–Ser-189, Asp-229–Val-233, and Asn-294–Asp-297 each bind GTP. Positions Ile-350–Lys-436 constitute a KH-like domain. The span at Glu-432–Lys-443 shows a compositional bias: basic and acidic residues. The disordered stretch occupies residues Glu-432–Asp-469. Residues Met-455–Asp-469 are compositionally biased toward basic residues.

It belongs to the TRAFAC class TrmE-Era-EngA-EngB-Septin-like GTPase superfamily. EngA (Der) GTPase family. Associates with the 50S ribosomal subunit.

Functionally, GTPase that plays an essential role in the late steps of ribosome biogenesis. The polypeptide is GTPase Der (Thiobacillus denitrificans (strain ATCC 25259 / T1)).